The following is a 398-amino-acid chain: Enoyl-[acyl-carrier-protein] reductase [NADH] (398 aa).

Residues 48–53, 74–75, 111–112, and 139–140 each bind NAD(+); these read GASTGY, FE, DG, and LA. Tyr225 provides a ligand contact to substrate. Residue Tyr235 is the Proton donor of the active site. NAD(+) contacts are provided by residues Lys244 and 273-275; that span reads VVT.

This sequence belongs to the TER reductase family. As to quaternary structure, monomer.

The enzyme catalyses a 2,3-saturated acyl-[ACP] + NAD(+) = a (2E)-enoyl-[ACP] + NADH + H(+). It functions in the pathway lipid metabolism; fatty acid biosynthesis. In terms of biological role, involved in the final reduction of the elongation cycle of fatty acid synthesis (FAS II). Catalyzes the reduction of a carbon-carbon double bond in an enoyl moiety that is covalently linked to an acyl carrier protein (ACP). The sequence is that of Enoyl-[acyl-carrier-protein] reductase [NADH] from Variovorax paradoxus (strain S110).